The chain runs to 188 residues: UPF0301 protein XOO1309 (188 aa).

Belongs to the UPF0301 (AlgH) family.

The polypeptide is UPF0301 protein XOO1309 (Xanthomonas oryzae pv. oryzae (strain MAFF 311018)).